A 98-amino-acid chain; its full sequence is Protein translation factor SUI1 homolog (98 aa).

It belongs to the SUI1 family.

This Pyrococcus furiosus (strain ATCC 43587 / DSM 3638 / JCM 8422 / Vc1) protein is Protein translation factor SUI1 homolog.